Consider the following 729-residue polypeptide: Elongation factor 2 (729 aa).

Positions 19 to 262 constitute a tr-type G domain; it reads EQIRNIAIAA…MVCEHFPNPI (244 aa). Residues 28 to 35, 94 to 98, and 148 to 151 contribute to the GTP site; these read AHVDHGKT, DTPGH, and NKVD. Position 597 is a diphthamide (histidine 597).

The protein belongs to the TRAFAC class translation factor GTPase superfamily. Classic translation factor GTPase family. EF-G/EF-2 subfamily.

Its subcellular location is the cytoplasm. In terms of biological role, catalyzes the GTP-dependent ribosomal translocation step during translation elongation. During this step, the ribosome changes from the pre-translocational (PRE) to the post-translocational (POST) state as the newly formed A-site-bound peptidyl-tRNA and P-site-bound deacylated tRNA move to the P and E sites, respectively. Catalyzes the coordinated movement of the two tRNA molecules, the mRNA and conformational changes in the ribosome. This Halomicrobium mukohataei (strain ATCC 700874 / DSM 12286 / JCM 9738 / NCIMB 13541) (Haloarcula mukohataei) protein is Elongation factor 2.